The sequence spans 171 residues: NADH-quinone oxidoreductase subunit I (171 aa).

2 4Fe-4S ferredoxin-type domains span residues 41-71 (LTRD…VVKT) and 81-110 (ESFT…LTPD). [4Fe-4S] cluster is bound by residues C51, C54, C57, C61, C90, C93, C96, and C100.

Belongs to the complex I 23 kDa subunit family. NDH-1 is composed of 13 different subunits. Subunits NuoA, H, J, K, L, M, N constitute the membrane sector of the complex. It depends on [4Fe-4S] cluster as a cofactor.

It is found in the cell inner membrane. It carries out the reaction a quinone + NADH + 5 H(+)(in) = a quinol + NAD(+) + 4 H(+)(out). In terms of biological role, NDH-1 shuttles electrons from NADH, via FMN and iron-sulfur (Fe-S) centers, to quinones in the respiratory chain. The immediate electron acceptor for the enzyme in this species is believed to be ubiquinone. Couples the redox reaction to proton translocation (for every two electrons transferred, four hydrogen ions are translocated across the cytoplasmic membrane), and thus conserves the redox energy in a proton gradient. This chain is NADH-quinone oxidoreductase subunit I, found in Shewanella woodyi (strain ATCC 51908 / MS32).